The primary structure comprises 421 residues: Dihydroorotase (421 aa).

The Zn(2+) site is built by His59 and His61. Residues 61–63 (HLR) and Asn93 contribute to the substrate site. Asp150, His177, and His230 together coordinate Zn(2+). Asn276 contributes to the substrate binding site. Residue Asp303 coordinates Zn(2+). The active site involves Asp303. A substrate-binding site is contributed by His307.

It belongs to the metallo-dependent hydrolases superfamily. DHOase family. Class I DHOase subfamily. Requires Zn(2+) as cofactor.

The catalysed reaction is (S)-dihydroorotate + H2O = N-carbamoyl-L-aspartate + H(+). It participates in pyrimidine metabolism; UMP biosynthesis via de novo pathway; (S)-dihydroorotate from bicarbonate: step 3/3. Functionally, catalyzes the reversible cyclization of carbamoyl aspartate to dihydroorotate. The chain is Dihydroorotase from Desulfotalea psychrophila (strain LSv54 / DSM 12343).